Reading from the N-terminus, the 144-residue chain is Transcription antitermination protein NusB (144 aa).

This sequence belongs to the NusB family.

Functionally, involved in transcription antitermination. Required for transcription of ribosomal RNA (rRNA) genes. Binds specifically to the boxA antiterminator sequence of the ribosomal RNA (rrn) operons. This is Transcription antitermination protein NusB from Haemophilus influenzae (strain PittGG).